Consider the following 154-residue polypeptide: uncharacterized protein (154 aa).

The transit peptide at 1-42 (MLRVIWKHSSRVTRSIELSNISTTNHTRSLRRLSWISPRRFY) directs the protein to the mitochondrion.

Its subcellular location is the mitochondrion. This is an uncharacterized protein from Saccharomyces cerevisiae (strain ATCC 204508 / S288c) (Baker's yeast).